We begin with the raw amino-acid sequence, 197 residues long: Thymidylate kinase (197 aa).

7 to 14 (GIDGCGKS) provides a ligand contact to ATP.

Belongs to the thymidylate kinase family.

The catalysed reaction is dTMP + ATP = dTDP + ADP. Functionally, phosphorylation of dTMP to form dTDP in both de novo and salvage pathways of dTTP synthesis. This Fervidobacterium nodosum (strain ATCC 35602 / DSM 5306 / Rt17-B1) protein is Thymidylate kinase.